The sequence spans 329 residues: Red chlorophyll catabolite reductase 1, chloroplastic (329 aa).

Residues 1–11 (MLQLRSPPPAT) are compositionally biased toward pro residues. A chloroplast-targeting transit peptide spans 1–50 (MLQLRSPPPATSSPSSAVSFPTLAPRLLPLRRRRRGAGSQLGGKTSSAVR). Residues 1–61 (MLQLRSPPPA…SSAAAPGATE (61 aa)) are disordered. Low complexity-rich tracts occupy residues 12-28 (SSPS…PRLL) and 46-59 (SSAV…APGA). Red chlorophyll catabolite is bound by residues Glu163, 216 to 218 (YRS), and Asp299.

As to expression, expressed in leaves. Expressed at low levels in roots, stems, panicles and seeds.

The protein localises to the plastid. It localises to the chloroplast. The catalysed reaction is primary fluorescent chlorophyll catabolite + 2 oxidized [2Fe-2S]-[ferredoxin] = red chlorophyll catabolite + 2 reduced [2Fe-2S]-[ferredoxin] + 3 H(+). It functions in the pathway porphyrin-containing compound metabolism; chlorophyll degradation. Functionally, catalyzes the key reaction of chlorophyll catabolism, porphyrin macrocycle cleavage of pheophorbide a (pheide a) to a primary fluorescent catabolite (pFCC). Works in a two-step reaction with pheophorbide a oxygenase (PaO) by reducing the C20/C1 double bond of the intermediate, RCC. Belongs to the chlorophyll catabolic enzymes (CCEs). May play a role in senescence and response to wounding. This chain is Red chlorophyll catabolite reductase 1, chloroplastic, found in Oryza sativa subsp. japonica (Rice).